The primary structure comprises 622 residues: Chaperone protein HscA homolog (622 aa).

Belongs to the heat shock protein 70 family.

Chaperone involved in the maturation of iron-sulfur cluster-containing proteins. Has a low intrinsic ATPase activity which is markedly stimulated by HscB. This Acidovorax sp. (strain JS42) protein is Chaperone protein HscA homolog.